Consider the following 87-residue polypeptide: HssA/B-like protein 28 (87 aa).

Belongs to the hssA/B family.

This Dictyostelium discoideum (Social amoeba) protein is HssA/B-like protein 28 (hssl28).